The primary structure comprises 460 residues: Probable Xaa-Pro aminopeptidase PEPP (460 aa).

Mn(2+) contacts are provided by Asp256, Asp267, Glu390, and Glu430.

It belongs to the peptidase M24B family. Requires Mn(2+) as cofactor.

The catalysed reaction is Release of any N-terminal amino acid, including proline, that is linked to proline, even from a dipeptide or tripeptide.. In terms of biological role, catalyzes the removal of a penultimate prolyl residue from the N-termini of peptides. This chain is Probable Xaa-Pro aminopeptidase PEPP (PEPP), found in Podospora anserina (strain S / ATCC MYA-4624 / DSM 980 / FGSC 10383) (Pleurage anserina).